Reading from the N-terminus, the 447-residue chain is Putative branched-chain amino acid carrier protein SAB1263c (447 aa).

A run of 12 helical transmembrane segments spans residues 6-26, 40-60, 74-94, 114-134, 143-163, 193-213, 229-249, 290-310, 326-346, 350-370, 382-402, and 417-437; these read WVIG…IFPP, ILAF…VGAL, PKFS…LFAI, SSIA…YICL, IGSL…IKGY, GYLT…VNAV, LTAG…LGYI, LLGI…IGAV, FVLV…NAVI, IPVL…ILIA, IPVI…LGWL, and LEWF…GIFV.

The protein belongs to the branched chain amino acid transporter family.

Its subcellular location is the cell membrane. Functionally, component of the transport system for branched-chain amino acids (leucine, isoleucine and valine), which is coupled to a proton motive force (Potential). Contributes to NaCl tolerance. This Staphylococcus aureus (strain bovine RF122 / ET3-1) protein is Putative branched-chain amino acid carrier protein SAB1263c.